Reading from the N-terminus, the 465-residue chain is Endo-1,3-1,4-beta-glycanase ExsH (465 aa).

Hemolysin-type calcium-binding repeat units lie at residues His33–Thr50, Phe105–Ile122, and Asp123–Phe140. A GH16 domain is found at Ala206 to Asp462. The Nucleophile role is filled by Glu349. Glu354 (proton donor) is an active-site residue.

It belongs to the glycosyl hydrolase 16 family.

The protein localises to the secreted. It participates in glycan metabolism; exopolysaccharide biosynthesis. Its function is as follows. Cleaves high molecular weight succinoglycan to yield LMW succinoglycan. Dynamically regulates the molecular weight distribution of succinoglycan by cleaving nascent succinoglycan only during a limited period after its synthesis, perhaps before it undergoes a time-dependent change in its conformation or aggregation state. The chain is Endo-1,3-1,4-beta-glycanase ExsH (exsH) from Rhizobium meliloti (strain 1021) (Ensifer meliloti).